The following is a 222-amino-acid chain: MAEKPKLHYFNARGRMESTRWLLAAAGVEFEEKFIKSAEDLDKLRNDGYLMFQQVPMVEIDGMKLVQTRAILNYIASKYNLYGKDIKERALIDMYIEGIADLGEMILLLPVCPPEEKDAKLALIKEKIKNRYFPAFEKVLKSHGQDYLVGNKLSRADIHLVELLYYVEELDSSLISSFPLLKALKTRISNLPTVKKFLQPGSPRKPPMDEKSLEEARKIFRF.

M1 is modified (N-acetylmethionine). The residue at position 2 (A2) is an N-acetylalanine; in Glutathione S-transferase A1, N-terminally processed. Residues 3-83 (EKPKLHYFNA…YIASKYNLYG (81 aa)) form the GST N-terminal domain. K4 carries the N6-succinyllysine modification. Residues Y9, R45, 54 to 55 (QV), and 67 to 68 (QT) each bind glutathione. One can recognise a GST C-terminal domain in the interval 85 to 207 (DIKERALIDM…LQPGSPRKPP (123 aa)).

This sequence belongs to the GST superfamily. Alpha family. Homodimer or heterodimer of GSTA1 and GSTA2. As to expression, liver.

The protein resides in the cytoplasm. It catalyses the reaction RX + glutathione = an S-substituted glutathione + a halide anion + H(+). The enzyme catalyses prostaglandin A2 + glutathione = prostaglandin A2-S-(R)-glutathione. It carries out the reaction prostaglandin J2 + glutathione = prostaglandin J2-S-(R)-glutathione. The catalysed reaction is (13S)-hydroperoxy-(9Z,11E)-octadecadienoate + 2 glutathione = (13S)-hydroxy-(9Z,11E)-octadecadienoate + glutathione disulfide + H2O. It catalyses the reaction androst-5-ene-3,17-dione = androst-4-ene-3,17-dione. The isomerase activity is inhibited by S-methylglutathione (GSMe). Glutathione S-transferase that catalyzes the nucleophilic attack of the sulfur atom of glutathione on the electrophilic groups of a wide range of exogenous and endogenous compounds. Involved in the formation of glutathione conjugates of both prostaglandin A2 (PGA2) and prostaglandin J2 (PGJ2). It also catalyzes the isomerization of D5-androstene-3,17-dione (AD) into D4-androstene-3,17-dione and may therefore play an important role in hormone biosynthesis. Through its glutathione-dependent peroxidase activity toward the fatty acid hydroperoxide (13S)-hydroperoxy-(9Z,11E)-octadecadienoate/13-HPODE it is also involved in the metabolism of oxidized linoleic acid. The protein is Glutathione S-transferase A1 (GSTA1) of Homo sapiens (Human).